We begin with the raw amino-acid sequence, 629 residues long: tRNA uridine 5-carboxymethylaminomethyl modification enzyme MnmG (629 aa).

FAD-binding positions include 14–19, Val-126, and Ser-181; that span reads GAGHAG. 273–287 contacts NAD(+); that stretch reads GPRYCPSIEDKVVRF. An FAD-binding site is contributed by Gln-370.

Belongs to the MnmG family. In terms of assembly, homodimer. Heterotetramer of two MnmE and two MnmG subunits. FAD is required as a cofactor.

The protein localises to the cytoplasm. Functionally, NAD-binding protein involved in the addition of a carboxymethylaminomethyl (cmnm) group at the wobble position (U34) of certain tRNAs, forming tRNA-cmnm(5)s(2)U34. The polypeptide is tRNA uridine 5-carboxymethylaminomethyl modification enzyme MnmG (Geobacillus thermodenitrificans (strain NG80-2)).